The chain runs to 146 residues: Large ribosomal subunit protein uL15 (146 aa).

The segment covering 1-10 has biased composition (polar residues); it reads MRLNQLSPSA. The interval 1–54 is disordered; sequence MRLNQLSPSAGSRPDAKRAGRGAGSGLGKTAGRGHKGQHSRSGGFHKVGFEGGQ. The segment covering 21-31 has biased composition (gly residues); sequence RGAGSGLGKTA.

Belongs to the universal ribosomal protein uL15 family. In terms of assembly, part of the 50S ribosomal subunit.

Binds to the 23S rRNA. The sequence is that of Large ribosomal subunit protein uL15 from Halorhodospira halophila (strain DSM 244 / SL1) (Ectothiorhodospira halophila (strain DSM 244 / SL1)).